The primary structure comprises 247 residues: Ubiquinone biosynthesis O-methyltransferase (247 aa).

S-adenosyl-L-methionine contacts are provided by Arg41, Gly72, Asp93, and Met136.

It belongs to the methyltransferase superfamily. UbiG/COQ3 family.

The catalysed reaction is a 3-demethylubiquinol + S-adenosyl-L-methionine = a ubiquinol + S-adenosyl-L-homocysteine + H(+). It catalyses the reaction a 3-(all-trans-polyprenyl)benzene-1,2-diol + S-adenosyl-L-methionine = a 2-methoxy-6-(all-trans-polyprenyl)phenol + S-adenosyl-L-homocysteine + H(+). Its pathway is cofactor biosynthesis; ubiquinone biosynthesis. O-methyltransferase that catalyzes the 2 O-methylation steps in the ubiquinone biosynthetic pathway. The polypeptide is Ubiquinone biosynthesis O-methyltransferase (Bartonella quintana (strain Toulouse) (Rochalimaea quintana)).